The chain runs to 423 residues: Sporulation-regulated protein 28 (423 aa).

In terms of domain architecture, Septin-type G spans 28–342 (KGLQLSILLL…ENYRAKVLTE (315 aa)). The G1 motif stretch occupies residues 38–45 (GEKGSGKS). GTP-binding positions include 38–45 (GEKGSGKS), Gly124, 204–212 (KADGLTETE), and Arg291. The G3 motif stretch occupies residues 121-124 (LFPG). A G4 motif region spans residues 203-206 (PKAD). The segment covering 360-381 (RGSVSNVSTRRNSASRTLGNPD) has biased composition (polar residues). The tract at residues 360-385 (RGSVSNVSTRRNSASRTLGNPDTNDE) is disordered. A coiled-coil region spans residues 384-417 (DENAYQIHKEIDEKNRIIEDYQRKIDLLEKMLAA).

The protein belongs to the TRAFAC class TrmE-Era-EngA-EngB-Septin-like GTPase superfamily. Septin GTPase family. Interacts with itself. Interacts with CDC11 and SPR3; probably to form a ring at the bud neck.

Its subcellular location is the membrane. It is found in the bud neck. In terms of biological role, septins are GTPases involved in cytokinesis that assemble into filaments and form a ring at the cleavage site. May act by recruiting MYO1 and HOF1, a protein involved in septation, to the site of cleavage. Septins are also involved in cell morphogenesis, bud site selection, chitin deposition, cell cycle regulation, cell compartmentalization and spore wall formation. The sequence is that of Sporulation-regulated protein 28 (SPR28) from Saccharomyces cerevisiae (strain ATCC 204508 / S288c) (Baker's yeast).